Here is a 637-residue protein sequence, read N- to C-terminus: DNA primase (637 aa).

The CHC2-type zinc finger occupies 39 to 63 (CPFHGEKTPSFNVNAEKGFYHCFGC). The region spanning 257–338 (HEVYLMEGFM…QIVKVPEGLD (82 aa)) is the Toprim domain. Residues Glu263, Asp307, and Asp309 each coordinate Mg(2+).

It belongs to the DnaG primase family. Monomer. Interacts with DnaB. It depends on Zn(2+) as a cofactor. Requires Mg(2+) as cofactor.

It catalyses the reaction ssDNA + n NTP = ssDNA/pppN(pN)n-1 hybrid + (n-1) diphosphate.. In terms of biological role, RNA polymerase that catalyzes the synthesis of short RNA molecules used as primers for DNA polymerase during DNA replication. The chain is DNA primase from Lactococcus lactis subsp. lactis (strain IL1403) (Streptococcus lactis).